A 378-amino-acid chain; its full sequence is Squalene methyltransferase 2 (378 aa).

The helical transmembrane segment at 17–37 threads the bilayer; sequence LLTVKGATGLIAALILGYIII.

It belongs to the class I-like SAM-binding methyltransferase superfamily. Erg6/SMT family.

The protein resides in the microsome membrane. It catalyses the reaction squalene + 2 S-adenosyl-L-methionine = 3,22-dimethyl-1,2,23,24-tetradehydro-2,3,22,23-tetrahydrosqualene + 2 S-adenosyl-L-homocysteine + 2 H(+). Converts squalene to mono- and dimethyl derivatives, but not to tri- and tetramethylated products. Unable to methylate cycloartenol, zymosterol or lanosterol. Methylates both C-3 and C22 positions, but only C-3 position in monomethylated products. Produces mainly monomethylated squalene and only 20% of dimethylated squalene. The chain is Squalene methyltransferase 2 (TMT-2) from Botryococcus braunii (Green alga).